The sequence spans 438 residues: Phosphatidylserine decarboxylase proenzyme 1, mitochondrial (438 aa).

Residues 1-21 (MRRFRVWPPSPSPWPLLASRP) constitute a mitochondrion transit peptide. Over 22–48 (CPHSHHHRSPFHASANSGARQGNFILP) the chain is Mitochondrial matrix. Residues 49–67 (GATAATLVMFGILHARRMY) traverse the membrane as a helical segment. Topologically, residues 68-438 (EDQKVVERKE…EAIGRWTSRE (371 aa)) are mitochondrial intermembrane. Catalysis depends on charge relay system; for autoendoproteolytic cleavage activity residues D173, H273, and S387. The Schiff-base intermediate with substrate; via pyruvic acid; for decarboxylase activity role is filled by S387. S387 is subject to Pyruvic acid (Ser); by autocatalysis.

It belongs to the phosphatidylserine decarboxylase family. PSD-B subfamily. Eukaryotic type I sub-subfamily. In terms of assembly, heterodimer of a large membrane-associated beta subunit and a small pyruvoyl-containing alpha subunit. The cofactor is pyruvate. Post-translationally, is synthesized initially as an inactive proenzyme. Formation of the active enzyme involves a self-maturation process in which the active site pyruvoyl group is generated from an internal serine residue via an autocatalytic post-translational modification. Two non-identical subunits are generated from the proenzyme in this reaction, and the pyruvate is formed at the N-terminus of the alpha chain, which is derived from the carboxyl end of the proenzyme. The autoendoproteolytic cleavage occurs by a canonical serine protease mechanism, in which the side chain hydroxyl group of the serine supplies its oxygen atom to form the C-terminus of the beta chain, while the remainder of the serine residue undergoes an oxidative deamination to produce ammonia and the pyruvoyl prosthetic group on the alpha chain. During this reaction, the Ser that is part of the protease active site of the proenzyme becomes the pyruvoyl prosthetic group, which constitutes an essential element of the active site of the mature decarboxylase.

Its subcellular location is the mitochondrion inner membrane. It carries out the reaction a 1,2-diacyl-sn-glycero-3-phospho-L-serine + H(+) = a 1,2-diacyl-sn-glycero-3-phosphoethanolamine + CO2. It participates in phospholipid metabolism; phosphatidylethanolamine biosynthesis; phosphatidylethanolamine from CDP-diacylglycerol: step 2/2. Functionally, catalyzes the formation of phosphatidylethanolamine (PtdEtn) from phosphatidylserine (PtdSer). Plays a central role in phospholipid metabolism and in the interorganelle trafficking of phosphatidylserine. This chain is Phosphatidylserine decarboxylase proenzyme 1, mitochondrial (PSD1), found in Oryza sativa subsp. japonica (Rice).